A 244-amino-acid chain; its full sequence is DNA repair protein RecO (244 aa).

Belongs to the RecO family.

Functionally, involved in DNA repair and RecF pathway recombination. The sequence is that of DNA repair protein RecO from Jannaschia sp. (strain CCS1).